The chain runs to 145 residues: MTRVIVEAVVKPSEDKDKVINAIRNFFDFDKIREEEHGMEKLLIAESNSLTSLLKLHRLLREQRILDAARKYLMKSIVGSRITFMLNKQVAAIGKLSFIDKEHESPLGPIKVTIDYKDPVIVVDWLTPKTAKGVPLWENAIPPEE.

It belongs to the UPF0201 family.

This is UPF0201 protein Saci_1285 from Sulfolobus acidocaldarius (strain ATCC 33909 / DSM 639 / JCM 8929 / NBRC 15157 / NCIMB 11770).